The following is a 121-amino-acid chain: DNA-directed RNA polymerase subunit omega (121 aa).

Belongs to the RNA polymerase subunit omega family. As to quaternary structure, the RNAP catalytic core consists of 2 alpha, 1 beta, 1 beta' and 1 omega subunit. When a sigma factor is associated with the core the holoenzyme is formed, which can initiate transcription.

The catalysed reaction is RNA(n) + a ribonucleoside 5'-triphosphate = RNA(n+1) + diphosphate. Functionally, promotes RNA polymerase assembly. Latches the N- and C-terminal regions of the beta' subunit thereby facilitating its interaction with the beta and alpha subunits. In Syntrophobacter fumaroxidans (strain DSM 10017 / MPOB), this protein is DNA-directed RNA polymerase subunit omega.